The primary structure comprises 352 residues: Photosystem II D2 protein (352 aa).

The residue at position 2 (threonine 2) is an N-acetylthreonine. Threonine 2 carries the phosphothreonine modification. The chain crosses the membrane as a helical span at residues 40–60; that stretch reads TAYLALGGWFTGTTFVTSWYT. Histidine 117 serves as a coordination point for chlorophyll a. A helical transmembrane segment spans residues 124–140; the sequence is GFMLRQFEIARSVKIRP. Pheophytin a is bound by residues glutamine 129 and asparagine 142. Residues 152 to 165 form a helical membrane-spanning segment; the sequence is VFVSVFLIYPLGQS. Histidine 197 contributes to the chlorophyll a binding site. Residues 207 to 227 form a helical membrane-spanning segment; it reads AALLCAIHGATVENTLFEDGD. A plastoquinone contacts are provided by histidine 214 and phenylalanine 261. Residue histidine 214 participates in Fe cation binding. Histidine 268 serves as a coordination point for Fe cation. Residues 278-294 traverse the membrane as a helical segment; it reads GLWMSAIGVVGLALNLR.

The protein belongs to the reaction center PufL/M/PsbA/D family. PSII is composed of 1 copy each of membrane proteins PsbA, PsbB, PsbC, PsbD, PsbE, PsbF, PsbH, PsbI, PsbJ, PsbK, PsbL, PsbM, PsbT, PsbX, PsbY, PsbZ, Psb30/Ycf12, at least 3 peripheral proteins of the oxygen-evolving complex and a large number of cofactors. It forms dimeric complexes. The D1/D2 heterodimer binds P680, chlorophylls that are the primary electron donor of PSII, and subsequent electron acceptors. It shares a non-heme iron and each subunit binds pheophytin, quinone, additional chlorophylls, carotenoids and lipids. There is also a Cl(-1) ion associated with D1 and D2, which is required for oxygen evolution. The PSII complex binds additional chlorophylls, carotenoids and specific lipids. serves as cofactor.

It localises to the plastid. The protein localises to the chloroplast thylakoid membrane. The enzyme catalyses 2 a plastoquinone + 4 hnu + 2 H2O = 2 a plastoquinol + O2. Its function is as follows. Photosystem II (PSII) is a light-driven water:plastoquinone oxidoreductase that uses light energy to abstract electrons from H(2)O, generating O(2) and a proton gradient subsequently used for ATP formation. It consists of a core antenna complex that captures photons, and an electron transfer chain that converts photonic excitation into a charge separation. The D1/D2 (PsbA/PsbD) reaction center heterodimer binds P680, the primary electron donor of PSII as well as several subsequent electron acceptors. D2 is needed for assembly of a stable PSII complex. The polypeptide is Photosystem II D2 protein (Chlorella vulgaris (Green alga)).